The chain runs to 399 residues: Bombesin receptor subtype-3 (399 aa).

The Extracellular segment spans residues methionine 1–serine 41. Asparagine 10 and asparagine 18 each carry an N-linked (GlcNAc...) asparagine glycan. Residues proline 42–leucine 63 form a helical membrane-spanning segment. The Cytoplasmic portion of the chain corresponds to glycine 64–proline 82. Residues asparagine 83–valine 103 traverse the membrane as a helical segment. Residues aspartate 104 to lysine 121 lie on the Extracellular side of the membrane. An intrachain disulfide couples cysteine 120 to cysteine 203. A helical membrane pass occupies residues valine 122–alanine 143. Over aspartate 144–lysine 163 the chain is Cytoplasmic. The chain crosses the membrane as a helical span at residues threonine 164 to isoleucine 184. Residues phenylalanine 185–leucine 220 lie on the Extracellular side of the membrane. Residues cysteine 221 to alanine 241 traverse the membrane as a helical segment. The Cytoplasmic segment spans residues arginine 242–threonine 272. The chain crosses the membrane as a helical span at residues valine 273–tyrosine 293. Residues histidine 294–isoleucine 313 lie on the Extracellular side of the membrane. The helical transmembrane segment at phenylalanine 314–leucine 333 threads the bilayer. Residues serine 334–phenylalanine 399 are Cytoplasmic-facing. A lipid anchor (S-palmitoyl cysteine) is attached at cysteine 347.

This sequence belongs to the G-protein coupled receptor 1 family. Interacts with C6orf89. In germ cells in testis. Lung carcinoma cells.

Its subcellular location is the cell membrane. Functionally, role in sperm cell division, maturation, or function. This receptor mediates its action by association with G proteins that activate a phosphatidylinositol-calcium second messenger system. In Homo sapiens (Human), this protein is Bombesin receptor subtype-3 (BRS3).